Consider the following 123-residue polypeptide: Urotensin-2 (123 aa).

Positions 1–20 (MDRVPFCCLLFIGLLNPLLS) are cleaved as a signal peptide. 2 propeptides span residues 21–104 (LPVT…LART) and 107–109 (QHK). Residues 57–88 (RQTMGTEAGESPGEAGPSTETPTPRGSMRKAF) are disordered. Residues cysteine 117 and cysteine 122 are joined by a disulfide bond.

This sequence belongs to the urotensin-2 family. In terms of tissue distribution, brain specific. Predominantly expressed in motoneurons of the brainstem and spinal cord.

It localises to the secreted. In terms of biological role, highly potent vasoconstrictor. The protein is Urotensin-2 (Uts2) of Mus musculus (Mouse).